Here is a 116-residue protein sequence, read N- to C-terminus: U11-theraphotoxin-Hhn1b (116 aa).

A signal peptide spans 1-21; it reads MNTVRVTFLLVFVLAVSLGQA. A propeptide spanning residues 22–74 is cleaved from the precursor; it reads DKDENRMEMQEKTEQGKSYLDFAENLLLQKLEELEAKLLEEDSEESRNSRQKR. Residues 60–69 are compositionally biased toward basic and acidic residues; sequence LEEDSEESRN. The segment at 60–83 is disordered; it reads LEEDSEESRNSRQKRCIGEGVPCD. 3 disulfides stabilise this stretch: Cys-75/Cys-90, Cys-82/Cys-95, and Cys-89/Cys-110.

The protein belongs to the neurotoxin 14 (magi-1) family. 01 (HNTX-16) subfamily. In terms of tissue distribution, expressed by the venom gland.

The protein resides in the secreted. Probable ion channel inhibitor. The chain is U11-theraphotoxin-Hhn1b from Cyriopagopus hainanus (Chinese bird spider).